Reading from the N-terminus, the 456-residue chain is Tyrosine phenol-lyase (456 aa).

Lysine 257 is modified (N6-(pyridoxal phosphate)lysine).

This sequence belongs to the beta-eliminating lyase family. As to quaternary structure, homotetramer. Pyridoxal 5'-phosphate is required as a cofactor. Post-translationally, contains L-DOPA (3',4'-dihydroxyphenylalanine).

Its subcellular location is the cytoplasm. It carries out the reaction L-tyrosine + H2O = phenol + pyruvate + NH4(+). The polypeptide is Tyrosine phenol-lyase (tpl) (Enterobacter agglomerans (Erwinia herbicola)).